A 437-amino-acid polypeptide reads, in one-letter code: Methylenetetrahydrofolate--tRNA-(uracil-5-)-methyltransferase TrmFO (437 aa).

An FAD-binding site is contributed by 10–15; sequence GAGLAG.

The protein belongs to the MnmG family. TrmFO subfamily. It depends on FAD as a cofactor.

It is found in the cytoplasm. The enzyme catalyses uridine(54) in tRNA + (6R)-5,10-methylene-5,6,7,8-tetrahydrofolate + NADH + H(+) = 5-methyluridine(54) in tRNA + (6S)-5,6,7,8-tetrahydrofolate + NAD(+). It carries out the reaction uridine(54) in tRNA + (6R)-5,10-methylene-5,6,7,8-tetrahydrofolate + NADPH + H(+) = 5-methyluridine(54) in tRNA + (6S)-5,6,7,8-tetrahydrofolate + NADP(+). Its function is as follows. Catalyzes the folate-dependent formation of 5-methyl-uridine at position 54 (M-5-U54) in all tRNAs. This Lysinibacillus sphaericus (strain C3-41) protein is Methylenetetrahydrofolate--tRNA-(uracil-5-)-methyltransferase TrmFO.